Reading from the N-terminus, the 141-residue chain is Calcitonin (141 aa).

The first 25 residues, 1 to 25 (MGFQKFSPFLALSILVLLQAGSLHA), serve as a signal peptide directing secretion. Residues 26 to 82 (APFRSALESSPADPATLSEDEARLLLAALVQDYVQMKASELEQEQEREGSSLDSPRS) constitute a propeptide that is removed on maturation. S43 is modified (phosphoserine). 2 disordered regions span residues 64-85 (SELEQEQEREGSSLDSPRSKRC) and 111-141 (IGVGAPGKKRDMSSDLERDHRPHVSMPQNAN). C85 and C91 form a disulfide bridge. P116 bears the Proline amide mark. Over residues 118–132 (KKRDMSSDLERDHRP) the composition is skewed to basic and acidic residues.

The protein belongs to the calcitonin family.

The protein resides in the secreted. Its function is as follows. Calcitonin is a peptide hormone that causes a rapid but short-lived drop in the level of calcium and phosphate in blood by promoting the incorporation of those ions in the bones. Calcitonin function is mediated by the calcitonin receptor/CALCR and the CALCR-RAMP2 (AMYR2) receptor complex. Katacalcin is a potent plasma calcium-lowering peptide. The polypeptide is Calcitonin (Homo sapiens (Human)).